The sequence spans 348 residues: Acetylesterase (348 aa).

Positions 1-16 (MRSILVIPSFVAVLNA) are cleaved as a signal peptide. 5 N-linked (GlcNAc...) asparagine glycosylation sites follow: asparagine 64, asparagine 165, asparagine 218, asparagine 223, and asparagine 297.

The protein belongs to the carbohydrate esterase CE16 family. N-glycosylated.

The protein localises to the secreted. It carries out the reaction an acetyl ester + H2O = an aliphatic alcohol + acetate + H(+). Functionally, acetylesterase that acts as an exo-deacetylase. Shows activity towards naphtyl acetate, triacetin, as well as towards glucose- and xylose acetates. Liberates acetic acid from xylo-oligomers. This Hypocrea jecorina (Trichoderma reesei) protein is Acetylesterase.